The following is a 483-amino-acid chain: Glutamate--tRNA ligase (483 aa).

A 'HIGH' region motif is present at residues Pro11–Asn21. The 'KMSKS' region signature appears at Lys255 to Arg259. Position 258 (Lys258) interacts with ATP.

The protein belongs to the class-I aminoacyl-tRNA synthetase family. Glutamate--tRNA ligase type 1 subfamily. Monomer.

It is found in the cytoplasm. The catalysed reaction is tRNA(Glu) + L-glutamate + ATP = L-glutamyl-tRNA(Glu) + AMP + diphosphate. In terms of biological role, catalyzes the attachment of glutamate to tRNA(Glu) in a two-step reaction: glutamate is first activated by ATP to form Glu-AMP and then transferred to the acceptor end of tRNA(Glu). The polypeptide is Glutamate--tRNA ligase (Lactococcus lactis subsp. cremoris (strain MG1363)).